Here is a 555-residue protein sequence, read N- to C-terminus: MALRAAVFDLDGVLALPSITTSWARAEEKLALPRGFLNEAFKKGGQDGSVARVMTGEITFSQWVPFMEEDCRKCAEDSGIRLPENFSVKHIFDKALSEKKINYPMLQAALTLKKKGFSTCILTNNWLDDSAQRGSRAQLMCELRPHFDFLIESCRVGMAKPDPQIYKLMLDTLKAEPNEVVFLDDVGTHLKPVRDLGMATILVRDTDTALRELEKVTGVQLLQTPALPPTSCDPSALSHGYVLIKPGVRLHFVEMGSGPAVCLCHGFPESWFSWRYQIPALAQAGFRVLAVDMKGYGESSAPPEIEEYSLEVLCKDMVTFLNKLGLSQAVFIGHDWGGVLVWNMALFYPERVRAVASLNTPFMPSNPNVSPMEIIKANPVFDYQLYFQEPGVAEAELEQNLDRTFKNFFRAHDETFLTTNRVRELGGLFVGTPEEPSLSRLVTEEDIQFYVQQFKKSGFRGPLNWYRNMERNWQWGCKGSGRKILIPALMVTAENDLVLHPKMSKHMENWIPHLKRGHIKDCGHWTQIDKPAELNRILIEWLETDARNPLVDSKL.

The segment at 1–224 (MALRAAVFDL…KVTGVQLLQT (224 aa)) is phosphatase. 2 residues coordinate Mg(2+): D9 and D11. Residue K43 is modified to N6-acetyllysine. 123–124 (TN) contacts phosphate. D185 contacts Mg(2+). N6-acetyllysine is present on residues K191 and K215. The epoxide hydrolase stretch occupies residues 235-555 (SALSHGYVLI…ARNPLVDSKL (321 aa)). The 273-residue stretch at 259–531 (PAVCLCHGFP…CGHWTQIDKP (273 aa)) folds into the AB hydrolase-1 domain. Residue D335 is the Nucleophile of the active site. Residue S370 is modified to Phosphoserine. Y383 contributes to the substrate binding site. K455 carries the post-translational modification N6-succinyllysine. The active-site Proton donor is Y466. K505 bears the N6-succinyllysine mark. Residue C522 is the site of S-(15-deoxy-Delta12,14-prostaglandin J2-9-yl)cysteine attachment. H524 (proton acceptor) is an active-site residue. Residues 553–555 (SKL) carry the Microbody targeting signal motif. Position 554 is an N6-succinyllysine (K554).

Belongs to the AB hydrolase superfamily. Epoxide hydrolase family. In terms of assembly, homodimer. Mg(2+) serves as cofactor. Post-translationally, the covalent modification of cysteine by 15-deoxy-Delta12,14-prostaglandin-J2 is autocatalytic and reversible. It may occur as an alternative to other cysteine modifications, such as S-nitrosylation and S-palmitoylation.

It is found in the cytoplasm. It localises to the peroxisome. The enzyme catalyses an epoxide + H2O = an ethanediol. The catalysed reaction is (9S,10S)-10-hydroxy-9-(phosphooxy)octadecanoate + H2O = (9S,10S)-9,10-dihydroxyoctadecanoate + phosphate. It catalyses the reaction (14R,15S)-epoxy-(5Z,8Z,11Z)-eicosatrienoate + H2O = (14R,15R)-dihydroxy-(5Z,8Z,11Z)-eicosatrienoate. Inhibited by 1-(1-acetylpiperidin-4-yl)-3-(4-(trifl uoromethoxy)phenyl)urea (TPAU), 1-cyclohexyl-3-dodecylurea (CDU), 12-(3-adamantan-1-yl-ureido)-dodecanoic acid (AUDA), 1-((3S, 5S, 7S)-adamantan-1-yl)-3-(5-(2-(2-ethoxyethoxy) ethoxy)pentyl)urea (AEPU), N-adamantyl-N[']-cyclohexyl urea (ACU), 4-(((1S, 4S)-4-(3-((3S, 5S, 7S)-adamantan-1-yl) ureido)cyclohexyl)oxy)benzoic acid (c-AUCB), 4-(((1R, 4R)-4-(3-((3S, 5S, 7S)-adamantan-1-yl)ureido)cyclohexyl)oxy)benzoic acid (t-AUCB), 4-(((1R, 4R)-4-(3-(4(trifluoromethoxy)phenyl)ureido)cyclohexyl)oxy)benzoic acid (t-TAUCB) and to a lesser extent by 8-(3-((3S, 5S, 7S)-adamantan-1-yl)ureido) octanoic acid (AUOA). Functionally, bifunctional enzyme. The C-terminal domain has epoxide hydrolase activity and acts on epoxides (alkene oxides, oxiranes) and arene oxides. Plays a role in xenobiotic metabolism by degrading potentially toxic epoxides. Also determines steady-state levels of physiological mediators. The N-terminal domain has lipid phosphatase activity, with the highest activity towards threo-9,10-phosphonooxy-hydroxy-octadecanoic acid, followed by erythro-9,10-phosphonooxy-hydroxy-octadecanoic acid, 12-phosphonooxy-octadec-9Z-enoic acid and 12-phosphonooxy-octadec-9E-enoic acid. In Sus scrofa (Pig), this protein is Bifunctional epoxide hydrolase 2 (EPHX2).